A 154-amino-acid chain; its full sequence is MAL-like protein (154 aa).

The next 4 helical transmembrane spans lie at 24–44 (LFLT…FWVW), 61–81 (VLYV…SYLF), 99–119 (GTTG…TIIS), and 131–151 (VAAS…AFSI). An MARVEL domain is found at 24 to 154 (LFLTIPFAFF…ILHAFSIYYH (131 aa)).

This sequence belongs to the MAL family.

It localises to the membrane. This Mus musculus (Mouse) protein is MAL-like protein (Mall).